Reading from the N-terminus, the 71-residue chain is Disintegrin simusmin (71 aa).

A Disintegrin domain is found at 1–71; it reads AGEECDCGSP…SADCPRNPFH (71 aa). 6 disulfide bridges follow: cysteine 5-cysteine 20, cysteine 7-cysteine 15, cysteine 14-cysteine 37, cysteine 28-cysteine 34, cysteine 33-cysteine 58, and cysteine 46-cysteine 65. A Cell attachment site motif is present at residues 50-52; it reads RGD.

Belongs to the venom metalloproteinase (M12B) family. P-II subfamily. P-IIa sub-subfamily. In terms of assembly, monomer. In terms of tissue distribution, expressed by the venom gland.

It is found in the secreted. Functionally, inhibits ADP- (IC(50)=56 nM) and collagen-induced (IC(50)=49 nM) aggregation of human platelets. In vitro, inhibits adhesion of endothelial cells to vitronectin, type-I collagen and, to a lower degree, fibronectin and laminin. This is Disintegrin simusmin from Crotalus simus (Central American rattlesnake).